Consider the following 82-residue polypeptide: Protein CYSTEINE-RICH TRANSMEMBRANE MODULE 13 (82 aa).

The disordered stretch occupies residues 1–58; it reads MYHQEQHPVGAPPPQGYPPKDGYPPAGYPPAGYPPPGYAQGYPAQGYPPPQYSQAPQQ. Residues 26 to 37 are compositionally biased toward pro residues; it reads AGYPPAGYPPPG. Residues 59-76 form a helical membrane-spanning segment; it reads KQNAGMLEGCLAALCCCC.

This sequence belongs to the CYSTM1 family. As to quaternary structure, homodimer and heterodimers. Interacts with CYSTM7, CYTSM3, CYTSM4, CYTSM5, CYTSM6, CYTSM9, CYTSM10 and CYTSM11. Binds weakly to CYSTM1 and CYSTM2. Expressed in root meristem, root vasculature, leaf vasculature and floral organ primordia. Mostly expressed in roots and flowers and, to a lower extent, in stems, siliques and leaves.

Its subcellular location is the cell membrane. Its function is as follows. Required for the promotion of megasporogenesis, or promotion of germ cell formation from somatic precursor cells. Acts redundantly with WIH2. Functions in a genetic pathway downstream of SPL/NZZ and WUS and together with TRN2 in promoting megasporogenesis. Involved in resistance to abiotic stress. The chain is Protein CYSTEINE-RICH TRANSMEMBRANE MODULE 13 from Arabidopsis thaliana (Mouse-ear cress).